The sequence spans 2035 residues: Proline-rich protein 12 (2035 aa).

Disordered stretches follow at residues 210–280, 292–311, 329–584, and 645–685; these read GGGV…ERAL, RPAS…LQHY, CSPL…GAPG, and QAPS…GTPY. Pro residues predominate over residues 223–240; that stretch reads QTPPYRPGPPDPPPPPRH. Positions 249-261 are enriched in low complexity; that stretch reads ASSSAATAAEPSS. Residues 296–305 show a composition bias toward pro residues; that stretch reads AQPPPPPPPA. A phosphoserine mark is found at serine 330 and serine 338. Residues 338–364 are compositionally biased toward low complexity; it reads SPGAGEPSKGGPSGATAGAAGRATGPE. Positions 365–377 are enriched in gly residues; that stretch reads TAGGGAAGGGGGY. Low complexity-rich tracts occupy residues 408-429 and 437-455; these read STAT…AGKA and SQAY…QAYG. Pro residues predominate over residues 476-487; that stretch reads PPQPPSGPPPPG. 2 stretches are compositionally biased toward polar residues: residues 490–501 and 520–534; these read TCQSYSPDQLQG and GLPT…STGH. The span at 540–555 shows a compositional bias: gly residues; it reads GHGGGWGPSSLGGGGE. Phosphoserine is present on serine 648. Residues 670–681 are compositionally biased toward gly residues; that stretch reads GLGGSGGAGGAP. The residue at position 735 (threonine 735) is a Phosphothreonine. Disordered stretches follow at residues 755 to 844, 851 to 870, 879 to 920, and 946 to 1061; these read AFLQ…PLQL, HGLE…SLEP, GALE…APRF, and EMFG…CSTK. Residues 830–841 are compositionally biased toward pro residues; that stretch reads PQPPPPPPPPMP. Phosphoserine is present on serine 859. Residues 1031-1046 are compositionally biased toward pro residues; that stretch reads SAPPPPPPPPPPPPVS. Phosphoserine is present on residues serine 1070 and serine 1128. Disordered stretches follow at residues 1112–1244, 1288–1355, 1367–1567, and 1662–1839; these read RRLP…DHNS, PLYQ…SPCK, TLPS…GEGI, and HRPP…PGRL. Positions 1190–1199 are enriched in basic residues; that stretch reads KPRGRGRGRG. Residues 1200 to 1214 are compositionally biased toward basic and acidic residues; the sequence is RKAEEMGGTRLEPLK. Lysine 1214 carries the post-translational modification N6-acetyllysine. Threonine 1295 is subject to Phosphothreonine. Residue serine 1299 is modified to Phosphoserine. Residues 1314–1329 show a composition bias toward pro residues; the sequence is QPPPPTVPTVPHPAPS. Residues serine 1372, serine 1373, and serine 1378 each carry the phosphoserine modification. Residues 1449-1529 show a composition bias toward pro residues; the sequence is PPTPPPAPTP…PPEEPPAPSP (81 aa). The segment covering 1535–1547 has biased composition (basic and acidic residues); sequence PDARPLHLAKKQE. At threonine 1555 the chain carries Phosphothreonine. Position 1562 is a phosphoserine (serine 1562). Residues 1698-1709 are compositionally biased toward basic and acidic residues; that stretch reads ETPEKMTSEKPP. Phosphothreonine is present on threonine 1699. The span at 1710-1730 shows a compositional bias: pro residues; it reads EPAPEPAVPEPPAPEKPSPPR. Residues 1731-1768 show a composition bias toward basic and acidic residues; the sequence is PVEKEKEKEKEKEKEKERVTRPLRSERATSGRQMRTDR. Polar residues predominate over residues 1769-1779; it reads SLATGQSTTSR. The segment covering 1817–1828 has biased composition (low complexity); the sequence is SSSDSESSPGAP. The residue at position 1924 (serine 1924) is a Phosphoserine.

In terms of tissue distribution, expressed in brain.

It localises to the nucleus. The protein localises to the postsynaptic density. It is found in the synapse. The protein resides in the synaptosome. This Mus musculus (Mouse) protein is Proline-rich protein 12.